A 203-amino-acid chain; its full sequence is IMP cyclohydrolase (203 aa).

Belongs to the archaeal IMP cyclohydrolase family.

The catalysed reaction is IMP + H2O = 5-formamido-1-(5-phospho-D-ribosyl)imidazole-4-carboxamide. It functions in the pathway purine metabolism; IMP biosynthesis via de novo pathway; IMP from 5-formamido-1-(5-phospho-D-ribosyl)imidazole-4-carboxamide: step 1/1. Its function is as follows. Catalyzes the cyclization of 5-formylamidoimidazole-4-carboxamide ribonucleotide to IMP. This Methanococcus aeolicus (strain ATCC BAA-1280 / DSM 17508 / OCM 812 / Nankai-3) protein is IMP cyclohydrolase.